Here is a 258-residue protein sequence, read N- to C-terminus: Snake venom serine protease catroxase-2 (258 aa).

A signal peptide spans 1-18 (MVLIRVLANLLILQLSYA). Positions 19–24 (QKSSEL) are excised as a propeptide. The region spanning 25–249 (VVGGDECNIN…YNDWIQSIIA (225 aa)) is the Peptidase S1 domain. 6 disulfides stabilise this stretch: Cys31–Cys163, Cys50–Cys66, Cys98–Cys256, Cys142–Cys210, Cys174–Cys189, and Cys200–Cys225. N-linked (GlcNAc...) asparagine glycosylation occurs at Asn44. Residues His65 and Asp110 each act as charge relay system in the active site. Catalysis depends on Ser204, which acts as the Charge relay system.

Belongs to the peptidase S1 family. Snake venom subfamily. In terms of assembly, monomer. As to expression, expressed by the venom gland.

It localises to the secreted. Functionally, snake venom serine protease that may act in the hemostasis system of the prey. The polypeptide is Snake venom serine protease catroxase-2 (Crotalus atrox (Western diamondback rattlesnake)).